The following is a 100-amino-acid chain: uncharacterized protein (100 aa).

The protein resides in the virion. This is an uncharacterized protein from Acanthamoeba polyphaga mimivirus (APMV).